Reading from the N-terminus, the 89-residue chain is MAQKKAGGSSRNGRDSAGRRLGVKKFGGETVVAGNIIIRQRGTKMKPGSNVGLGRDHTIFALVDGHVKFERRAEGRVHVSVEALPVAAE.

The tract at residues 1-22 (MAQKKAGGSSRNGRDSAGRRLG) is disordered.

The protein belongs to the bacterial ribosomal protein bL27 family.

The protein is Large ribosomal subunit protein bL27 of Gluconacetobacter diazotrophicus (strain ATCC 49037 / DSM 5601 / CCUG 37298 / CIP 103539 / LMG 7603 / PAl5).